A 113-amino-acid polypeptide reads, in one-letter code: Large ribosomal subunit protein bL19 (113 aa).

Belongs to the bacterial ribosomal protein bL19 family.

In terms of biological role, this protein is located at the 30S-50S ribosomal subunit interface and may play a role in the structure and function of the aminoacyl-tRNA binding site. This is Large ribosomal subunit protein bL19 from Nocardia farcinica (strain IFM 10152).